A 61-amino-acid polypeptide reads, in one-letter code: UPF0434 protein Bpet2671 (61 aa).

This sequence belongs to the UPF0434 family.

This is UPF0434 protein Bpet2671 from Bordetella petrii (strain ATCC BAA-461 / DSM 12804 / CCUG 43448).